A 310-amino-acid polypeptide reads, in one-letter code: Uracil phosphoribosyltransferase homolog (310 aa).

Disordered regions lie at residues 1–27 and 62–89; these read MASELQRPDSMPCHNRQVNSTSSPSPE and SERDSPACCSTNLHSENHSDSSDSGNYD. Residues 16–25 show a composition bias toward polar residues; the sequence is RQVNSTSSPS. At serine 25 the chain carries Phosphoserine. Residues arginine 134, arginine 143, and 177–180 contribute to the GTP site; that span reads EKGN. A 5-phospho-alpha-D-ribose 1-diphosphate-binding site is contributed by arginine 187. 2 residues coordinate GTP: arginine 204 and arginine 233. 239-247 contributes to the 5-phospho-alpha-D-ribose 1-diphosphate binding site; that stretch reads YPILSTGNT. Residue 300–302 participates in uracil binding; it reads THF.

The protein belongs to the UPRTase family.

The protein resides in the cytoplasm. The protein localises to the nucleus. The sequence is that of Uracil phosphoribosyltransferase homolog (Uprt) from Mus musculus (Mouse).